Reading from the N-terminus, the 1183-residue chain is Formin-like protein (1183 aa).

Disordered stretches follow at residues 1–44 (MGAV…SISS) and 63–82 (QHVR…PTTD). The segment covering 23–36 (PHSHAHHHSMRNGH) has biased composition (basic residues). Residues 63–79 (QHVRQPSLRSRSQQPMP) show a composition bias toward polar residues. The GBD/FH3 domain occupies 76-559 (QPMPTTDELD…HNEQELKKRD (484 aa)). Serine 225 is subject to Phosphoserine. The segment covering 572–584 (LSRSLPRSASSGD) has biased composition (polar residues). The interval 572–681 (LSRSLPRSAS…PPVAGFMPAP (110 aa)) is disordered. Pro residues-rich tracts occupy residues 605-614 (LPPPPPPMPA) and 622-640 (APPP…PPGF). The segment covering 641–654 (SPLGSPSGSLASTA) has biased composition (low complexity). One can recognise an FH2 domain in the interval 687–1088 (IKRKVPTKYK…AALAASKKEN (402 aa)). The DAD domain maps to 1136-1169 (DEVYNGALEDILLGLKSEPYRRADAVRRSQRRRI).

This sequence belongs to the formin homology family. In terms of assembly, self-associates. Interacts (via GBD/FH3 domain) with Cdc42; the interaction is stronger with the GTP bound form of Cdc42.

Functionally, together with Cdc42, involved in establishment of planar cell polarity in the developing compound eye by contributing to ommatidial rotation. Together with DAAM and Cdc42, has a role in neuronal development of mushroom bodies. The sequence is that of Formin-like protein from Drosophila melanogaster (Fruit fly).